The following is a 497-amino-acid chain: Argininosuccinate lyase (497 aa).

The protein belongs to the lyase 1 family. Argininosuccinate lyase subfamily.

Its subcellular location is the cytoplasm. It catalyses the reaction 2-(N(omega)-L-arginino)succinate = fumarate + L-arginine. The protein operates within amino-acid biosynthesis; L-arginine biosynthesis; L-arginine from L-ornithine and carbamoyl phosphate: step 3/3. The polypeptide is Argininosuccinate lyase (Clavibacter michiganensis subsp. michiganensis (strain NCPPB 382)).